The following is a 972-amino-acid chain: 116 kDa U5 small nuclear ribonucleoprotein component (972 aa).

Residues 1-53 (MDTDLYDEFGNYIGPELDSDDEDDELGRESKELDELEDDDDDDDMGDHDEDHP) form a disordered region. 2 stretches are compositionally biased toward acidic residues: residues 17–26 (LDSDDEDDEL) and 34–48 (DELE…MGDH). Residues 127 to 409 (ELIRNVTLCG…GIHLTKEELK (283 aa)) form the tr-type G domain. GTP-binding positions include 136 to 143 (GHLHHGKT), 204 to 208 (DTPGH), and 258 to 261 (NKID).

This sequence belongs to the TRAFAC class translation factor GTPase superfamily. Classic translation factor GTPase family. EF-G/EF-2 subfamily. In terms of assembly, component of the U5 snRNP and the U4/U6-U5 tri-snRNP complex, a building block of the spliceosome. Component of the pre-catalytic, catalytic and post-catalytic spliceosome complexes. Component of the minor spliceosome, which splices U12-type introns.

Its subcellular location is the nucleus. Required for pre-mRNA splicing as component of the spliceosome, including pre-catalytic, catalytic and post-catalytic spliceosomal complexes. Component of the U5 snRNP and the U4/U6-U5 tri-snRNP complex, a building block of the spliceosome. As a component of the minor spliceosome, involved in the splicing of U12-type introns in pre-mRNAs. The protein is 116 kDa U5 small nuclear ribonucleoprotein component (EFTUD2) of Gallus gallus (Chicken).